The sequence spans 93 residues: Red pigment-concentrating hormone (93 aa).

A signal peptide spans 1–21; sequence MVRAVVATLLVVLVVASCVSA. Gln-22 carries the pyrrolidone carboxylic acid modification. Trp-29 carries the post-translational modification Tryptophan amide. Positions 33–93 are excised as a propeptide; that stretch reads AAAGGEGTGM…VQCQDEEYLG (61 aa). A disordered region spans residues 34–56; that stretch reads AAGGEGTGMHPPAGAVVPPPSSL.

Belongs to the AKH/HRTH/RPCH family. Strongly expressed in the eyestalk and weakly in brain. Not expressed in other tissues tested.

The protein localises to the secreted. This hormone adapts the animal to light backgrounds by stimulating concentration of the pigment of its red body-chromatophores. The chain is Red pigment-concentrating hormone from Penaeus monodon (Giant tiger prawn).